Reading from the N-terminus, the 460-residue chain is G2/mitotic-specific cyclin-4 (460 aa).

It belongs to the cyclin family. Cyclin AB subfamily.

Functionally, essential for the control of the cell cycle at the G2/M (mitosis) transition. Interacts with the CDC2 protein kinase to form MPF. G2/M cyclins accumulate steadily during G2 and are abruptly destroyed at mitosis. The sequence is that of G2/mitotic-specific cyclin-4 (CLB4) from Saccharomyces cerevisiae (strain ATCC 204508 / S288c) (Baker's yeast).